The chain runs to 513 residues: uncharacterized protein (513 aa).

One can recognise a TRAM domain in the interval 3-61; the sequence is NLKIGQKLQLEIERMGINGEGIGVISGRLVFIPYALPGEEVLVEITENARNFSRAKLVK. Residues Gln309, Tyr338, Asp359, and Asp407 each coordinate S-adenosyl-L-methionine. Catalysis depends on Cys434, which acts as the Nucleophile.

Belongs to the class I-like SAM-binding methyltransferase superfamily. RNA M5U methyltransferase family.

This is an uncharacterized protein from Lactococcus lactis subsp. lactis (strain IL1403) (Streptococcus lactis).